A 401-amino-acid polypeptide reads, in one-letter code: Nicotinate phosphoribosyltransferase (401 aa).

His-221 is subject to Phosphohistidine; by autocatalysis.

The protein belongs to the NAPRTase family. In terms of processing, transiently phosphorylated on a His residue during the reaction cycle. Phosphorylation strongly increases the affinity for substrates and increases the rate of nicotinate D-ribonucleotide production. Dephosphorylation regenerates the low-affinity form of the enzyme, leading to product release.

The catalysed reaction is nicotinate + 5-phospho-alpha-D-ribose 1-diphosphate + ATP + H2O = nicotinate beta-D-ribonucleotide + ADP + phosphate + diphosphate. The protein operates within cofactor biosynthesis; NAD(+) biosynthesis; nicotinate D-ribonucleotide from nicotinate: step 1/1. Catalyzes the synthesis of beta-nicotinate D-ribonucleotide from nicotinate and 5-phospho-D-ribose 1-phosphate at the expense of ATP. The protein is Nicotinate phosphoribosyltransferase of Yersinia pseudotuberculosis serotype O:1b (strain IP 31758).